A 293-amino-acid polypeptide reads, in one-letter code: 4-hydroxy-3-methylbut-2-enyl diphosphate reductase (293 aa).

Cysteine 12 contacts [4Fe-4S] cluster. (2E)-4-hydroxy-3-methylbut-2-enyl diphosphate contacts are provided by histidine 40 and histidine 74. Positions 40 and 74 each coordinate dimethylallyl diphosphate. Positions 40 and 74 each coordinate isopentenyl diphosphate. Cysteine 96 provides a ligand contact to [4Fe-4S] cluster. A (2E)-4-hydroxy-3-methylbut-2-enyl diphosphate-binding site is contributed by histidine 128. Residue histidine 128 coordinates dimethylallyl diphosphate. Histidine 128 is a binding site for isopentenyl diphosphate. Catalysis depends on glutamate 130, which acts as the Proton donor. Threonine 166 provides a ligand contact to (2E)-4-hydroxy-3-methylbut-2-enyl diphosphate. A [4Fe-4S] cluster-binding site is contributed by cysteine 202. (2E)-4-hydroxy-3-methylbut-2-enyl diphosphate is bound by residues serine 230, serine 231, asparagine 232, and serine 274. Dimethylallyl diphosphate is bound by residues serine 230, serine 231, asparagine 232, and serine 274. Residues serine 230, serine 231, asparagine 232, and serine 274 each contribute to the isopentenyl diphosphate site.

This sequence belongs to the IspH family. [4Fe-4S] cluster is required as a cofactor.

It catalyses the reaction isopentenyl diphosphate + 2 oxidized [2Fe-2S]-[ferredoxin] + H2O = (2E)-4-hydroxy-3-methylbut-2-enyl diphosphate + 2 reduced [2Fe-2S]-[ferredoxin] + 2 H(+). It carries out the reaction dimethylallyl diphosphate + 2 oxidized [2Fe-2S]-[ferredoxin] + H2O = (2E)-4-hydroxy-3-methylbut-2-enyl diphosphate + 2 reduced [2Fe-2S]-[ferredoxin] + 2 H(+). The protein operates within isoprenoid biosynthesis; dimethylallyl diphosphate biosynthesis; dimethylallyl diphosphate from (2E)-4-hydroxy-3-methylbutenyl diphosphate: step 1/1. Its pathway is isoprenoid biosynthesis; isopentenyl diphosphate biosynthesis via DXP pathway; isopentenyl diphosphate from 1-deoxy-D-xylulose 5-phosphate: step 6/6. Functionally, catalyzes the conversion of 1-hydroxy-2-methyl-2-(E)-butenyl 4-diphosphate (HMBPP) into a mixture of isopentenyl diphosphate (IPP) and dimethylallyl diphosphate (DMAPP). Acts in the terminal step of the DOXP/MEP pathway for isoprenoid precursor biosynthesis. The protein is 4-hydroxy-3-methylbut-2-enyl diphosphate reductase of Cytophaga hutchinsonii (strain ATCC 33406 / DSM 1761 / CIP 103989 / NBRC 15051 / NCIMB 9469 / D465).